The primary structure comprises 277 residues: Caspase-3 (277 aa).

M1 carries the N-acetylmethionine modification. 2 propeptides span residues 1–9 (MENSENSVD) and 10–28 (AKSI…KSMD). K11 carries the N6-acetyllysine modification. Position 26 is a phosphoserine (S26). Catalysis depends on residues H121 and C163. C163 carries the post-translational modification S-nitrosocysteine; in inhibited form.

It belongs to the peptidase C14A family. In terms of assembly, heterotetramer that consists of two anti-parallel arranged heterodimers, each one formed by a 17 kDa (p17) and a 12 kDa (p12) subunit. Interacts with BIRC6/bruce. In terms of processing, cleavage by granzyme B, caspase-6, caspase-8 and caspase-10 generates the two active subunits. Additional processing of the propeptides is likely due to the autocatalytic activity of the activated protease. Active heterodimers between the small subunit of caspase-7 protease and the large subunit of caspase-3 also occur and vice versa. S-nitrosylated on its catalytic site cysteine in unstimulated cell lines and denitrosylated upon activation of the Fas apoptotic pathway, associated with an increase in intracellular caspase activity. Fas therefore activates caspase-3 not only by inducing the cleavage of the caspase zymogen to its active subunits, but also by stimulating the denitrosylation of its active site thiol. Post-translationally, ubiquitinated by BIRC6; this activity is inhibited by DIABLO/SMAC.

The protein resides in the cytoplasm. The enzyme catalyses Strict requirement for an Asp residue at positions P1 and P4. It has a preferred cleavage sequence of Asp-Xaa-Xaa-Asp-|- with a hydrophobic amino-acid residue at P2 and a hydrophilic amino-acid residue at P3, although Val or Ala are also accepted at this position.. Inhibited by BIRC6; following inhibition of BIRC6-caspase binding by DIABLO/SMAC, BIRC6 is subjected to caspase cleavage, leading to an increase in active caspases. Functionally, involved in the activation cascade of caspases responsible for apoptosis execution. At the onset of apoptosis, it proteolytically cleaves poly(ADP-ribose) polymerase PARP1 at a '216-Asp-|-Gly-217' bond. Cleaves and activates sterol regulatory element binding proteins (SREBPs) between the basic helix-loop-helix leucine zipper domain and the membrane attachment domain. Cleaves and activates caspase-6, -7 and -9 (CASP6, CASP7 and CASP9, respectively). Cleaves and inactivates interleukin-18 (IL18). Triggers cell adhesion in sympathetic neurons through RET cleavage. Cleaves IL-1 beta between an Asp and an Ala, releasing the mature cytokine which is involved in a variety of inflammatory processes. Cleaves and inhibits serine/threonine-protein kinase AKT1 in response to oxidative stress. Acts as an inhibitor of type I interferon production during virus-induced apoptosis by mediating cleavage of antiviral proteins CGAS, IRF3 and MAVS, thereby preventing cytokine overproduction. Also involved in pyroptosis by mediating cleavage and activation of gasdermin-E (GSDME). Cleaves XRCC4 and phospholipid scramblase proteins XKR4, XKR8 and XKR9, leading to promote phosphatidylserine exposure on apoptotic cell surface. Cleaves BIRC6 following inhibition of BIRC6-caspase binding by DIABLO/SMAC. In Felis catus (Cat), this protein is Caspase-3 (CASP3).